Consider the following 156-residue polypeptide: ATP synthase subunit b (156 aa).

Residues 12-32 (VAFLIFVLFCMKFVWPPVIAA) traverse the membrane as a helical segment.

This sequence belongs to the ATPase B chain family. As to quaternary structure, F-type ATPases have 2 components, F(1) - the catalytic core - and F(0) - the membrane proton channel. F(1) has five subunits: alpha(3), beta(3), gamma(1), delta(1), epsilon(1). F(0) has three main subunits: a(1), b(2) and c(10-14). The alpha and beta chains form an alternating ring which encloses part of the gamma chain. F(1) is attached to F(0) by a central stalk formed by the gamma and epsilon chains, while a peripheral stalk is formed by the delta and b chains.

The protein localises to the cell inner membrane. In terms of biological role, f(1)F(0) ATP synthase produces ATP from ADP in the presence of a proton or sodium gradient. F-type ATPases consist of two structural domains, F(1) containing the extramembraneous catalytic core and F(0) containing the membrane proton channel, linked together by a central stalk and a peripheral stalk. During catalysis, ATP synthesis in the catalytic domain of F(1) is coupled via a rotary mechanism of the central stalk subunits to proton translocation. Functionally, component of the F(0) channel, it forms part of the peripheral stalk, linking F(1) to F(0). In Pseudomonas fluorescens (strain Pf0-1), this protein is ATP synthase subunit b.